The primary structure comprises 309 residues: Homoserine kinase (309 aa).

91 to 101 serves as a coordination point for ATP; that stretch reads PIGSGLGSSAC.

It belongs to the GHMP kinase family. Homoserine kinase subfamily.

The protein resides in the cytoplasm. It catalyses the reaction L-homoserine + ATP = O-phospho-L-homoserine + ADP + H(+). Its pathway is amino-acid biosynthesis; L-threonine biosynthesis; L-threonine from L-aspartate: step 4/5. In terms of biological role, catalyzes the ATP-dependent phosphorylation of L-homoserine to L-homoserine phosphate. The sequence is that of Homoserine kinase from Salmonella arizonae (strain ATCC BAA-731 / CDC346-86 / RSK2980).